Here is a 1827-residue protein sequence, read N- to C-terminus: Sucrase-isomaltase, intestinal (1827 aa).

Topologically, residues 2-12 (AKRKFSGLEIT) are cytoplasmic. The residue at position 7 (S7) is a Phosphoserine; by PKA. A helical; Signal-anchor for type II membrane protein transmembrane segment spans residues 13 to 32 (LIVLFVIVFIIAIALIAVLA). The Lumenal segment spans residues 33 to 1827 (TKTPAVEEVN…LDDPIEISWS (1795 aa)). The interval 39–64 (EEVNPSSSTPTTTSTTTSTSGSVSCP) is disordered. Low complexity predominate over residues 43–64 (PSSSTPTTTSTTTSTSGSVSCP). In terms of domain architecture, P-type 1 spans 61–110 (VSCPSELNEVVNERINCIPEQSPTQAICAQRNCCWRPWNNSDIPWCFFVD). Cystine bridges form between C63–C94, C77–C93, and C88–C106. N99 is a glycosylation site (N-linked (GlcNAc...) asparagine). Residues 110–1007 (DNHGYNVEGM…DLQLNPTRTR (898 aa)) form an isomaltase region. 2 residues coordinate substrate: D264 and D388. Sulfotyrosine is present on residues Y391 and Y400. The N-linked (GlcNAc...) asparagine glycan is linked to N455. D505 serves as the catalytic Nucleophile; for isomaltase activity. Residues C520 and C545 are joined by a disulfide bond. R588 lines the substrate pocket. The For isomaltase activity role is filled by D604. Residues C635 and C646 are joined by a disulfide bond. H662 provides a ligand contact to substrate. 3 N-linked (GlcNAc...) asparagine glycosylation sites follow: N859, N896, and N904. Residues 932–978 (DQTFLESEKITCYPDADIATQEKCTQRGCIWDTNTVNPRAPECYFPK) form the P-type 2 domain. Positions 1008–1827 (ITLPSEPITN…LDDPIEISWS (820 aa)) are sucrase. N-linked (GlcNAc...) asparagine glycans are attached at residues N1235, N1303, N1325, N1340, N1354, and N1368. Y1382 and Y1385 each carry sulfotyrosine. Residue D1394 is the Nucleophile; for sucrase activity of the active site. E1397 (for sucrase activity) is an active-site residue. Residue N1403 is glycosylated (N-linked (GlcNAc...) asparagine). D1500 (proton donor; for sucrase activity) is an active-site residue. N-linked (GlcNAc...) asparagine glycans are attached at residues N1535, N1572, N1748, N1763, and N1799.

It belongs to the glycosyl hydrolase 31 family. As to quaternary structure, the resulting sucrase and isomaltase subunits stay associated with one another in a complex by non-covalent linkages. In terms of processing, the precursor is proteolytically cleaved when exposed to pancreatic proteases in the intestinal lumen. N- and O-glycosylated. Post-translationally, sulfated.

Its subcellular location is the apical cell membrane. The enzyme catalyses Hydrolysis of sucrose and maltose by an alpha-D-glucosidase-type action.. It carries out the reaction Hydrolysis of (1-&gt;6)-alpha-D-glucosidic linkages in some oligosaccharides produced from starch and glycogen by alpha-amylase, and in isomaltose.. In terms of biological role, plays an important role in the final stage of carbohydrate digestion. Isomaltase activity is specific for both alpha-1,4- and alpha-1,6-oligosaccharides. The chain is Sucrase-isomaltase, intestinal (SI) from Oryctolagus cuniculus (Rabbit).